Here is a 469-residue protein sequence, read N- to C-terminus: Argininosuccinate lyase (469 aa).

Belongs to the lyase 1 family. Argininosuccinate lyase subfamily.

It localises to the cytoplasm. It catalyses the reaction 2-(N(omega)-L-arginino)succinate = fumarate + L-arginine. Its pathway is amino-acid biosynthesis; L-arginine biosynthesis; L-arginine from L-ornithine and carbamoyl phosphate: step 3/3. This Mycolicibacterium smegmatis (strain ATCC 700084 / mc(2)155) (Mycobacterium smegmatis) protein is Argininosuccinate lyase.